We begin with the raw amino-acid sequence, 614 residues long: Nuclear receptor subfamily 1 group D member 1 (614 aa).

A compositionally biased stretch (polar residues) spans 1-48 (MTTLDSNNNTGGVITYIGSSGSSPNRTSPESLYSDSSNGSFQSLTQGC). The interval 1 to 70 (MTTLDSNNNT…TQDPARSFGS (70 aa)) is required for phosphorylation by CSNK1E and cytoplasmic localization. Residues 1–120 (MTTLDSNNNT…GNRVSPSKST (120 aa)) are disordered. The segment at 1–129 (MTTLDSNNNT…TSNITKLNGM (129 aa)) is modulating. Residues 49–285 (PTYFPPSPTG…PPRSPSPEPT (237 aa)) are crucial for activation of GJA1. Phosphoserine; by GSK3-beta occurs at positions 55 and 59. Residues 69–103 (GSIPPSLGDDGSPSSSSSSSSSSSSSFYNGSPPGG) are compositionally biased toward low complexity. Residues 130–206 (VLLCKVCGDV…VGMSRDAVRF (77 aa)) constitute a DNA-binding region (nuclear receptor). 2 consecutive NR C4-type zinc fingers follow at residues 133–153 (CKVC…CEGC) and 170–194 (CLKN…FKKC). N6-acetyllysine; by KAT5 occurs at positions 192 and 193. Residues 233–286 (SSQCPLETPPTQHPTPGPMGPSPPPAPAPSPLVGFSQFPQQLTPPRSPSPEPTV) are disordered. The span at 239 to 262 (ETPPTQHPTPGPMGPSPPPAPAPS) shows a compositional bias: pro residues. Thr275 bears the Phosphothreonine; by CDK1 mark. The 330-residue stretch at 285–614 (TVEDVISQVA…KLLSFRVDAQ (330 aa)) folds into the NR LBD domain. Cys418 serves as a coordination point for heme. Lys591 bears the N6-acetyllysine mark. Position 602 (His602) interacts with heme.

The protein belongs to the nuclear hormone receptor family. NR1 subfamily. In terms of assembly, binds DNA as a monomer or a homodimer. Interacts with C1D, NR2E3, SP1 and ZNHIT1. Interacts with OPHN1 (via C-terminus). Interacts with PER2; the interaction associates PER2 to BMAL1 promoter region. Interacts with CRY1. Interacts with CCAR2. Interacts with SIAH2. Interacts with FBXW7 and CDK1. Interacts with HUWE1. Interacts with NR0B2. Interacts with NFIL3. Interacts (via domain NR LBD) with HSP90AA1 and HSP90AB1. Ubiquitinated, leading to its proteasomal degradation. Ubiquitinated by the SCF(FBXW7) complex when phosphorylated by CDK1 leading to its proteasomal degradation. Ubiquitinated by SIAH2; leading to its proteasomal degradation. Rapidly ubiquitinated in response to inflammatory triggers and sumoylation is a prerequisite to its ubiquitination. Post-translationally, sumoylated by UBE2I, desumoylated by SENP1, and sumoylation is a prerequisite to its ubiquitination. In terms of processing, phosphorylated by CSNK1E; phosphorylation enhances its cytoplasmic localization. Undergoes lysosome-mediated degradation in a time-dependent manner in the liver. Expressed in all tissues and cell lines examined. Expressed at high levels in some squamous carcinoma cell lines.

The protein localises to the nucleus. It localises to the cytoplasm. Its subcellular location is the cell projection. The protein resides in the dendrite. It is found in the dendritic spine. Its function is as follows. Transcriptional repressor which coordinates circadian rhythm and metabolic pathways in a heme-dependent manner. Integral component of the complex transcription machinery that governs circadian rhythmicity and forms a critical negative limb of the circadian clock by directly repressing the expression of core clock components BMAL1, CLOCK and CRY1. Also regulates genes involved in metabolic functions, including lipid and bile acid metabolism, adipogenesis, gluconeogenesis and the macrophage inflammatory response. Acts as a receptor for heme which stimulates its interaction with the NCOR1/HDAC3 corepressor complex, enhancing transcriptional repression. Recognizes two classes of DNA response elements within the promoter of its target genes and can bind to DNA as either monomers or homodimers, depending on the nature of the response element. Binds as a monomer to a response element composed of the consensus half-site motif 5'-[A/G]GGTCA-3' preceded by an A/T-rich 5' sequence (RevRE), or as a homodimer to a direct repeat of the core motif spaced by two nucleotides (RevDR-2). Acts as a potent competitive repressor of ROR alpha (RORA) function and regulates the levels of its ligand heme by repressing the expression of PPARGC1A, a potent inducer of heme synthesis. Regulates lipid metabolism by repressing the expression of APOC3 and by influencing the activity of sterol response element binding proteins (SREBPs); represses INSIG2 which interferes with the proteolytic activation of SREBPs which in turn govern the rhythmic expression of enzymes with key functions in sterol and fatty acid synthesis. Regulates gluconeogenesis via repression of G6PC1 and PEPCK and adipocyte differentiation via repression of PPARG. Regulates glucagon release in pancreatic alpha-cells via the AMPK-NAMPT-SIRT1 pathway and the proliferation, glucose-induced insulin secretion and expression of key lipogenic genes in pancreatic-beta cells. Positively regulates bile acid synthesis by increasing hepatic expression of CYP7A1 via repression of NR0B2 and NFIL3 which are negative regulators of CYP7A1. Modulates skeletal muscle oxidative capacity by regulating mitochondrial biogenesis and autophagy; controls mitochondrial biogenesis and respiration by interfering with the STK11-PRKAA1/2-SIRT1-PPARGC1A signaling pathway. Represses the expression of SERPINE1/PAI1, an important modulator of cardiovascular disease and the expression of inflammatory cytokines and chemokines in macrophages. Represses gene expression at a distance in macrophages by inhibiting the transcription of enhancer-derived RNAs (eRNAs). Plays a role in the circadian regulation of body temperature and negatively regulates thermogenic transcriptional programs in brown adipose tissue (BAT); imposes a circadian oscillation in BAT activity, increasing body temperature when awake and depressing thermogenesis during sleep. In concert with NR2E3, regulates transcriptional networks critical for photoreceptor development and function. In addition to its activity as a repressor, can also act as a transcriptional activator. In the ovarian granulosa cells acts as a transcriptional activator of STAR which plays a role in steroid biosynthesis. In collaboration with SP1, activates GJA1 transcription in a heme-independent manner. Represses the transcription of CYP2B10, CYP4A10 and CYP4A14. Represses the transcription of CES2. Represses and regulates the circadian expression of TSHB in a NCOR1-dependent manner. Negatively regulates the protein stability of NR3C1 and influences the time-dependent subcellular distribution of NR3C1, thereby affecting its transcriptional regulatory activity. Plays a critical role in the circadian control of neutrophilic inflammation in the lung; under resting, non-stress conditions, acts as a rhythmic repressor to limit inflammatory activity whereas in the presence of inflammatory triggers undergoes ubiquitin-mediated degradation thereby relieving inhibition of the inflammatory response. Plays a key role in the circadian regulation of microglial activation and neuroinflammation; suppresses microglial activation through the NF-kappaB pathway in the central nervous system. Plays a role in the regulation of the diurnal rhythms of lipid and protein metabolism in the skeletal muscle via transcriptional repression of genes controlling lipid and amino acid metabolism in the muscle. This is Nuclear receptor subfamily 1 group D member 1 (NR1D1) from Ovis aries (Sheep).